The chain runs to 70 residues: Small ribosomal subunit protein bS21 (70 aa).

Belongs to the bacterial ribosomal protein bS21 family.

The chain is Small ribosomal subunit protein bS21 from Methylibium petroleiphilum (strain ATCC BAA-1232 / LMG 22953 / PM1).